Here is a 136-residue protein sequence, read N- to C-terminus: MLAPKKQKFRKAHKGRVASKAKAGTTLAFGSFGLKSIDGWRVTARQIEAGRKAATRCMKRQGRLWIRIFPDVPVSQKPAEVRMGKGKGSPEFFAVRVSPGRIMFEIEGVEENVALRALELASAKLPVRTRIVRRYE.

The protein belongs to the universal ribosomal protein uL16 family. As to quaternary structure, part of the 50S ribosomal subunit.

In terms of biological role, binds 23S rRNA and is also seen to make contacts with the A and possibly P site tRNAs. The chain is Large ribosomal subunit protein uL16 from Rickettsia massiliae (strain Mtu5).